A 146-amino-acid polypeptide reads, in one-letter code: Hemoglobin subunit beta (146 aa).

The region spanning 2-146 (HWTAEEKQLI…VAHALARKYH (145 aa)) is the Globin domain. Residues histidine 63 and histidine 92 each coordinate heme b.

This sequence belongs to the globin family. As to quaternary structure, heterotetramer of two alpha chains and two beta chains. As to expression, red blood cells.

In terms of biological role, involved in oxygen transport from the lung to the various peripheral tissues. This is Hemoglobin subunit beta (HBB) from Branta canadensis (Canada goose).